The primary structure comprises 208 residues: Ribosome maturation factor RimM (208 aa).

The PRC barrel domain occupies 98–205; it reads ADEFYVPDLI…IIEITPPDGL (108 aa). The segment at 154–174 is disordered; that stretch reads LPSKSKRSRDTKNQKKNQSPP.

It belongs to the RimM family. In terms of assembly, binds ribosomal protein uS19.

Its subcellular location is the cytoplasm. In terms of biological role, an accessory protein needed during the final step in the assembly of 30S ribosomal subunit, possibly for assembly of the head region. Essential for efficient processing of 16S rRNA. May be needed both before and after RbfA during the maturation of 16S rRNA. It has affinity for free ribosomal 30S subunits but not for 70S ribosomes. The protein is Ribosome maturation factor RimM of Trichodesmium erythraeum (strain IMS101).